We begin with the raw amino-acid sequence, 585 residues long: Arginine--tRNA ligase (585 aa).

The 'HIGH' region signature appears at 127–137 (PNTNKPLHVGH).

This sequence belongs to the class-I aminoacyl-tRNA synthetase family. As to quaternary structure, monomer.

The protein resides in the cytoplasm. The enzyme catalyses tRNA(Arg) + L-arginine + ATP = L-arginyl-tRNA(Arg) + AMP + diphosphate. The polypeptide is Arginine--tRNA ligase (Borrelia duttonii (strain Ly)).